We begin with the raw amino-acid sequence, 384 residues long: uncharacterized protein (384 aa).

The span at 327-339 (KKEKKEKKEKKPK) shows a compositional bias: basic residues. The disordered stretch occupies residues 327–358 (KKEKKEKKEKKPKKAVEEEPKQYLTPEFVNDD).

This is an uncharacterized protein from Magallana gigas (Pacific oyster).